The primary structure comprises 104 residues: Sweet protein mabinlin-3 (104 aa).

4 cysteine pairs are disulfide-bonded: C4-C53, C17-C42, C43-C91, and C55-C99.

The protein belongs to the 2S seed storage albumins family. As to quaternary structure, heterodimer of a small A and a large B chain linked by disulfide bonds.

Heat stable 2S seed storage protein having sweetness-inducing activity. The sequence is that of Sweet protein mabinlin-3 from Capparis masaikai (Mabinlang).